We begin with the raw amino-acid sequence, 401 residues long: Subtilisin-like protease 10 (401 aa).

The first 19 residues, 1-19, serve as a signal peptide directing secretion; it reads MLFLKAVIAILSVLPAADA. A propeptide spanning residues 20 to 116 is cleaved from the precursor; that stretch reads AAILNFENKQ…IEPDRMASAQ (97 aa). The Inhibitor I9 domain maps to 35-112; the sequence is SYIVVLKNDI…QVDYIEPDRM (78 aa). A Peptidase S8 domain is found at 126-401; that stretch reads SWGLGRISHQ…NRLLYNGSGQ (276 aa). Catalysis depends on charge relay system residues aspartate 158 and histidine 189. The N-linked (GlcNAc...) asparagine glycan is linked to asparagine 250. Serine 347 serves as the catalytic Charge relay system. A glycan (N-linked (GlcNAc...) asparagine) is linked at asparagine 397.

The protein belongs to the peptidase S8 family.

The protein resides in the secreted. In terms of biological role, secreted subtilisin-like serine protease with keratinolytic activity that contributes to pathogenicity. The sequence is that of Subtilisin-like protease 10 (SUB10) from Arthroderma otae (strain ATCC MYA-4605 / CBS 113480) (Microsporum canis).